The chain runs to 468 residues: Hydroxymethylglutaryl-CoA synthase B (468 aa).

The active-site Proton donor/acceptor is Glu85. The Acyl-thioester intermediate role is filled by Cys119. (3S)-3-hydroxy-3-methylglutaryl-CoA contacts are provided by Cys119, Thr161, Ser211, His250, Lys259, Asn327, and Ser359. His250 (proton donor/acceptor) is an active-site residue.

It belongs to the thiolase-like superfamily. HMG-CoA synthase family.

The catalysed reaction is acetoacetyl-CoA + acetyl-CoA + H2O = (3S)-3-hydroxy-3-methylglutaryl-CoA + CoA + H(+). The protein operates within metabolic intermediate biosynthesis; (R)-mevalonate biosynthesis; (R)-mevalonate from acetyl-CoA: step 2/3. Functionally, condenses acetyl-CoA with acetoacetyl-CoA to form HMG-CoA, which is the substrate for HMG-CoA reductase. In Dictyostelium discoideum (Social amoeba), this protein is Hydroxymethylglutaryl-CoA synthase B (hgsB).